The sequence spans 154 residues: Protein X (154 aa).

The tract at residues 68-117 is mitochondrial targeting sequence; that stretch reads PCALRFTSARRMETTVNAHQFLPKVLHKRTLGLSVMSTTDLEAYFKDCLF.

Belongs to the orthohepadnavirus protein X family. As to quaternary structure, may form homodimer. May interact with host CEBPA, CFLAR, CREB1, DDB1, E4F1, HBXIP, HSPD1/HSP60, NFKBIA, POLR2E and SMAD4. Interacts with host SMC5-SMC6 complex and induces its degradation. Interacts with host TRPC4AP; leading to prevent ubiquitination of TRPC4AP. Interacts with host PLSCR1; this interaction promotes ubiquitination and degradation of HBx and impairs HBx-mediated cell proliferation. In terms of processing, a fraction may be phosphorylated in insect cells and HepG2 cells, a human hepatoblastoma cell line. Phosphorylated in vitro by host protein kinase C or mitogen-activated protein kinase. N-acetylated in insect cells.

The protein localises to the host cytoplasm. The protein resides in the host nucleus. It localises to the host mitochondrion. Its function is as follows. Multifunctional protein that plays a role in silencing host antiviral defenses and promoting viral transcription. Does not seem to be essential for HBV infection. May be directly involved in development of cirrhosis and liver cancer (hepatocellular carcinoma). Most of cytosolic activities involve modulation of cytosolic calcium. The effect on apoptosis is controversial depending on the cell types in which the studies have been conducted. May induce apoptosis by localizing in mitochondria and causing loss of mitochondrial membrane potential. May also modulate apoptosis by binding host CFLAR, a key regulator of the death-inducing signaling complex (DISC). Promotes viral transcription by using the host E3 ubiquitin ligase DDB1 to target the SMC5-SMC6 complex to proteasomal degradation. This host complex would otherwise bind to viral episomal DNA, and prevents its transcription. Moderately stimulates transcription of many different viral and cellular transcription elements. Promoters and enhancers stimulated by HBx contain DNA binding sites for NF-kappa-B, AP-1, AP-2, c-EBP, ATF/CREB, or the calcium-activated factor NF-AT. This chain is Protein X, found in Hepatitis B virus genotype D (isolate France/alpha1/1989) (HBV-D).